The chain runs to 230 residues: Flavin-dependent thymidylate synthase (230 aa).

A ThyX domain is found at 1–217 (MEIKVLEKGF…PVTYEAFLNF (217 aa)). FAD contacts are provided by residues Ser55, 78-80 (RHR), and Glu86. DUMP is bound by residues 75 to 78 (QLVR), 86 to 90 (ERSGR), and Arg156. The ThyX motif motif lies at 78–88 (RHRIASINERS). FAD-binding positions include 172 to 174 (NAR) and Asn178. A dUMP-binding site is contributed by Arg183. The active-site Involved in ionization of N3 of dUMP, leading to its activation is the Arg183.

Belongs to the thymidylate synthase ThyX family. As to quaternary structure, homotetramer. FAD is required as a cofactor.

It carries out the reaction dUMP + (6R)-5,10-methylene-5,6,7,8-tetrahydrofolate + NADPH + H(+) = dTMP + (6S)-5,6,7,8-tetrahydrofolate + NADP(+). Its pathway is pyrimidine metabolism; dTTP biosynthesis. In terms of biological role, catalyzes the reductive methylation of 2'-deoxyuridine-5'-monophosphate (dUMP) to 2'-deoxythymidine-5'-monophosphate (dTMP) while utilizing 5,10-methylenetetrahydrofolate (mTHF) as the methyl donor, and NADPH and FADH(2) as the reductant. The sequence is that of Flavin-dependent thymidylate synthase from Kosmotoga olearia (strain ATCC BAA-1733 / DSM 21960 / TBF 19.5.1).